Consider the following 111-residue polypeptide: UPF0060 membrane protein CPR_1507 (111 aa).

A run of 4 helical transmembrane segments spans residues 7–27 (IFYF…IWLW), 33–53 (SLIY…IPTL), 60–80 (FGRV…LCGW), and 85–105 (IIPD…VLII).

It belongs to the UPF0060 family.

Its subcellular location is the cell membrane. This Clostridium perfringens (strain SM101 / Type A) protein is UPF0060 membrane protein CPR_1507.